We begin with the raw amino-acid sequence, 382 residues long: SOX domain-containing protein dichaete (382 aa).

2 disordered regions span residues 53–142 and 346–382; these read GGSP…EGHI and YPSS…PVLY. Over residues 60–69 the composition is skewed to gly residues; sequence AGQGVNGSSG. Residues 96–123 show a composition bias toward low complexity; that stretch reads NSSIGSAGSLGSQSSLGSNGSGLNSSSG. A DNA-binding region (HMG box) is located at residues 142–210; the sequence is IKRPMNAFMV…LHMKEHPDYK (69 aa). Over residues 347–360 the composition is skewed to low complexity; sequence PSSSTSSPGSSPGT.

As to expression, initially expressed in a pair-rule-like pattern which is rapidly replaced by strong neuroectoderm expression.

It localises to the nucleus. Functionally, essential for segmentation and CNS development. May modulate the actions of other transcription factors, including gap and pair-rule proteins. This chain is SOX domain-containing protein dichaete (D), found in Drosophila melanogaster (Fruit fly).